We begin with the raw amino-acid sequence, 1496 residues long: DNA-directed RNA polymerase subunit beta' (1496 aa).

Residues Cys-67, Cys-69, Cys-82, and Cys-85 each coordinate Zn(2+). Mg(2+) contacts are provided by Asp-499, Asp-501, and Asp-503. Cys-867, Cys-943, Cys-950, and Cys-953 together coordinate Zn(2+).

This sequence belongs to the RNA polymerase beta' chain family. As to quaternary structure, the RNAP catalytic core consists of 2 alpha, 1 beta, 1 beta' and 1 omega subunit. When a sigma factor is associated with the core the holoenzyme is formed, which can initiate transcription. It depends on Mg(2+) as a cofactor. Requires Zn(2+) as cofactor.

It carries out the reaction RNA(n) + a ribonucleoside 5'-triphosphate = RNA(n+1) + diphosphate. In terms of biological role, DNA-dependent RNA polymerase catalyzes the transcription of DNA into RNA using the four ribonucleoside triphosphates as substrates. In Chlorobium limicola (strain DSM 245 / NBRC 103803 / 6330), this protein is DNA-directed RNA polymerase subunit beta'.